The sequence spans 156 residues: Adult-specific rigid cuticular protein 15.5 (156 aa).

In terms of domain architecture, Chitin-binding type R&amp;R spans 23 to 84 (IGNYAFNYGT…SVKTNEPGTA (62 aa)).

Functionally, component of the rigid cuticle of the spider. This chain is Adult-specific rigid cuticular protein 15.5, found in Araneus diadematus (European garden spider).